Reading from the N-terminus, the 1138-residue chain is Serine/threonine/tyrosine-interacting-like protein 2 (1138 aa).

Residues 1 to 20 (MATGGDAEEEQVVPNEEDEA) are disordered. Positions 132 to 280 (NEVDEVWPNV…LRELNEKLME (149 aa)) constitute a Tyrosine-protein phosphatase domain. Ser291 bears the Phosphoserine mark. Disordered stretches follow at residues 309 to 336 (EEED…VTLI), 348 to 473 (EWRK…TWDM), 486 to 515 (ARKY…DDEE), 552 to 575 (KKDS…GEKN), 592 to 618 (QKKV…AKKR), 660 to 694 (AAPS…LPNL), 761 to 800 (SGCL…VRGT), and 850 to 1117 (FKKK…DEAI). Residues 316-331 (SHLSGSSLGKASQVSK) are compositionally biased toward polar residues. A Phosphoserine modification is found at Ser373. Acidic residues predominate over residues 376-385 (DGDDCEDEDV). Residues 386–409 (ERIIQEWQSRNERYQAKGREQWNR) are compositionally biased toward basic and acidic residues. Residue Thr427 is modified to Phosphothreonine. Ser503 and Ser555 each carry phosphoserine. Basic and acidic residues-rich tracts occupy residues 552–567 (KKDS…HGTE) and 595–614 (VGSE…DTVL). The span at 672–687 (SVLSTQSHRSHASNMP) shows a compositional bias: polar residues. A compositionally biased stretch (low complexity) spans 773-788 (SSDVQSVLSSTSSLTS). Residues 858–871 (DEDMSVGDRDEDTD) are compositionally biased toward acidic residues. Phosphoserine is present on Ser862. Positions 878–897 (RYSSRSNSQKPETDASSSLA) are enriched in polar residues. Ser929 is modified (phosphoserine). Residues 936–947 (SGSSRGRYTRSS) show a composition bias toward low complexity. Over residues 965-977 (RSQEQDTSFHEAN) the composition is skewed to basic and acidic residues. Ser966 is modified (phosphoserine). A compositionally biased stretch (polar residues) spans 980–992 (TVRNTSRFSSSTT). Ser1016 is modified (phosphoserine). Basic and acidic residues-rich tracts occupy residues 1035-1059 (PEPR…KSDF) and 1074-1091 (RSEE…EEGR). A compositionally biased stretch (polar residues) spans 1095–1106 (GRQSQYRRSTNQ). The span at 1107-1116 (QEEEEMDDEA) shows a compositional bias: acidic residues.

It belongs to the protein-tyrosine phosphatase family. Non-receptor class dual specificity subfamily.

Its subcellular location is the cytoplasm. The protein localises to the myofibril. It localises to the sarcomere. Its function is as follows. May be required for myofiber maturation. The protein is Serine/threonine/tyrosine-interacting-like protein 2 (Styxl2) of Mus musculus (Mouse).